The following is a 306-amino-acid chain: Homoserine kinase (306 aa).

An ATP-binding site is contributed by 91-101 (PLARGLGSSAA).

This sequence belongs to the GHMP kinase family. Homoserine kinase subfamily.

It localises to the cytoplasm. It carries out the reaction L-homoserine + ATP = O-phospho-L-homoserine + ADP + H(+). It functions in the pathway amino-acid biosynthesis; L-threonine biosynthesis; L-threonine from L-aspartate: step 4/5. Functionally, catalyzes the ATP-dependent phosphorylation of L-homoserine to L-homoserine phosphate. This chain is Homoserine kinase, found in Bacillus licheniformis (strain ATCC 14580 / DSM 13 / JCM 2505 / CCUG 7422 / NBRC 12200 / NCIMB 9375 / NCTC 10341 / NRRL NRS-1264 / Gibson 46).